Here is a 281-residue protein sequence, read N- to C-terminus: MARNNTITLYDLQLESGCTISPYVWRTKYALKHKGFDIDIVPGGFTGILERTGGRSERVPVIVDDGEWVLDSWVIAEYLDEKYPDRPMLFEGPTQKNLMKFLDNWLWSTAVGPWFRCYILDYHDLSLPQDRDYVRWSREQWFLGGQRLEDVQAGREDRLPLVPPTLEPFRRILAETKWLGGDQPNFADYSALAVFLWTASVARTPPLTEDDPLRDWLDRGFDLFDGLGRHPGMNPLFGLKLREGDPEPFVRQTGPAGAGGQALNKGPQTTKMPPRVAEKAD.

Residues 11-87 (DLQLESGCTI…YLDEKYPDRP (77 aa)) form the GST N-terminal domain. The disordered stretch occupies residues 244–281 (GDPEPFVRQTGPAGAGGQALNKGPQTTKMPPRVAEKAD).

Belongs to the GST superfamily.

The protein resides in the cell inner membrane. Functionally, able to degrade various dimeric lignin compounds. Catalyzes the unique and reductive cleavage of arylglycerol-beta-aryl ether. This chain is Beta-etherase (ligE), found in Sphingobium sp. (strain NBRC 103272 / SYK-6).